Consider the following 69-residue polypeptide: Large ribosomal subunit protein uL29 (69 aa).

Belongs to the universal ribosomal protein uL29 family.

This chain is Large ribosomal subunit protein uL29, found in Staphylococcus saprophyticus subsp. saprophyticus (strain ATCC 15305 / DSM 20229 / NCIMB 8711 / NCTC 7292 / S-41).